A 217-amino-acid polypeptide reads, in one-letter code: Large ribosomal subunit protein uL3 (217 aa).

The residue at position 152 (Gln-152) is an N5-methylglutamine.

Belongs to the universal ribosomal protein uL3 family. As to quaternary structure, part of the 50S ribosomal subunit. Forms a cluster with proteins L14 and L19. Methylated by PrmB.

Functionally, one of the primary rRNA binding proteins, it binds directly near the 3'-end of the 23S rRNA, where it nucleates assembly of the 50S subunit. The protein is Large ribosomal subunit protein uL3 of Blochmanniella pennsylvanica (strain BPEN).